A 187-amino-acid polypeptide reads, in one-letter code: TATA-box-binding protein (187 aa).

2 repeat units span residues isoleucine 10 to leucine 86 and valine 101 to leucine 179.

The protein belongs to the TBP family.

General factor that plays a role in the activation of archaeal genes transcribed by RNA polymerase. Binds specifically to the TATA box promoter element which lies close to the position of transcription initiation. The polypeptide is TATA-box-binding protein (Natronomonas pharaonis (strain ATCC 35678 / DSM 2160 / CIP 103997 / JCM 8858 / NBRC 14720 / NCIMB 2260 / Gabara) (Halobacterium pharaonis)).